The chain runs to 228 residues: UPF0758 protein Gura_4138 (228 aa).

One can recognise an MPN domain in the interval 106 to 228 (RFTSPSQVFE…FLSFVDRGMM (123 aa)). The Zn(2+) site is built by histidine 177, histidine 179, and aspartate 190. The JAMM motif signature appears at 177-190 (HNHPTGDPTPSRED).

The protein belongs to the UPF0758 family.

This chain is UPF0758 protein Gura_4138, found in Geotalea uraniireducens (strain Rf4) (Geobacter uraniireducens).